Consider the following 129-residue polypeptide: Trefoil factor 2 (129 aa).

The signal sequence occupies residues M1–A23. Q24 is modified (pyrrolidone carboxylic acid). 2 consecutive P-type domains span residues C29–L73 and E79–I122. 7 disulfide bridges follow: C29/C127, C31/C58, C42/C57, C52/C69, C81/C107, C91/C106, and C101/C118.

It is found in the secreted. Its function is as follows. Inhibits gastrointestinal motility and gastric acid secretion. Could function as a structural component of gastric mucus, possibly by stabilizing glycoproteins in the mucus gel through interactions with carbohydrate side chains. The protein is Trefoil factor 2 (TFF2) of Canis lupus familiaris (Dog).